A 366-amino-acid chain; its full sequence is Spermine synthase (366 aa).

Ala2 carries the post-translational modification N-acetylalanine. Ser57 bears the Phosphoserine mark. One can recognise a PABS domain in the interval 122-362 (RYWPTADGRL…ELWVFYTVWK (241 aa)). S-adenosyl 3-(methylsulfanyl)propylamine is bound at residue Gln148. Tyr177 and Asp201 together coordinate spermidine. Residues Glu220 and 255–256 (DC) each bind S-adenosyl 3-(methylsulfanyl)propylamine. The active-site Proton acceptor is the Asp276. Spermidine is bound by residues Tyr351 and Glu353.

Belongs to the spermidine/spermine synthase family. In terms of assembly, homodimer. Dimerization is mediated through the N-terminal domain and seems to be required for activity as deletion of the N-terminal domain causes complete loss of activity.

It catalyses the reaction S-adenosyl 3-(methylsulfanyl)propylamine + spermidine = spermine + S-methyl-5'-thioadenosine + H(+). It functions in the pathway amine and polyamine biosynthesis; spermine biosynthesis; spermine from spermidine: step 1/1. In terms of biological role, catalyzes the production of spermine from spermidine and decarboxylated S-adenosylmethionine (dcSAM). Required for normal viability, growth and fertility. The sequence is that of Spermine synthase (Sms) from Mus musculus (Mouse).